We begin with the raw amino-acid sequence, 213 residues long: tRNA (guanine-N(7)-)-methyltransferase (213 aa).

Residues Glu44, Glu69, Asn96, and Asp118 each contribute to the S-adenosyl-L-methionine site. Asp118 is a catalytic residue. Lys122 serves as a coordination point for substrate. Residues 124–129 (RHEKRR) are interaction with RNA. Substrate contacts are provided by residues Asp154 and 191–194 (TEYE).

This sequence belongs to the class I-like SAM-binding methyltransferase superfamily. TrmB family.

The catalysed reaction is guanosine(46) in tRNA + S-adenosyl-L-methionine = N(7)-methylguanosine(46) in tRNA + S-adenosyl-L-homocysteine. Its pathway is tRNA modification; N(7)-methylguanine-tRNA biosynthesis. Functionally, catalyzes the formation of N(7)-methylguanine at position 46 (m7G46) in tRNA. The sequence is that of tRNA (guanine-N(7)-)-methyltransferase from Oceanobacillus iheyensis (strain DSM 14371 / CIP 107618 / JCM 11309 / KCTC 3954 / HTE831).